Consider the following 136-residue polypeptide: Small ribosomal subunit protein uS12 (136 aa).

Positions Met-1–Pro-28 are disordered. A 3-methylthioaspartic acid modification is found at Asp-89. The disordered stretch occupies residues Thr-101–Arg-136. A compositionally biased stretch (basic residues) spans Gly-113 to Lys-123.

Belongs to the universal ribosomal protein uS12 family. In terms of assembly, part of the 30S ribosomal subunit. Contacts proteins S8 and S17. May interact with IF1 in the 30S initiation complex.

Functionally, with S4 and S5 plays an important role in translational accuracy. In terms of biological role, interacts with and stabilizes bases of the 16S rRNA that are involved in tRNA selection in the A site and with the mRNA backbone. Located at the interface of the 30S and 50S subunits, it traverses the body of the 30S subunit contacting proteins on the other side and probably holding the rRNA structure together. The combined cluster of proteins S8, S12 and S17 appears to hold together the shoulder and platform of the 30S subunit. In Cyanothece sp. (strain PCC 7425 / ATCC 29141), this protein is Small ribosomal subunit protein uS12.